The chain runs to 170 residues: Cyclic dof factor 4 (170 aa).

Positions 25–51 (NEEETHPPEQEATIAVRSSSSSDLTAE) are disordered. The Dof-type zinc-finger motif lies at 58–112 (IACPRCKSMETKFCYFNNYNVNQPRHFCKGCHRYWTAGGALRNVPVGAGRRKSKP). Residues Cys-60, Cys-63, Cys-85, and Cys-88 each coordinate Zn(2+).

In terms of tissue distribution, expressed in the vasculature of cotyledons and hypocotyls, leaves and roots.

It is found in the nucleus. In terms of biological role, transcription factor that binds specifically to a 5'-AA[AG]G-3' consensus core sequence. Transcriptional repressor of 'CONSTANS' expression. Regulates a photoperiodic flowering response. The sequence is that of Cyclic dof factor 4 (CDF4) from Arabidopsis thaliana (Mouse-ear cress).